The chain runs to 239 residues: MPIKKPCLKLNLDSLNVVRSEIPQMLSANERLKNNFNILYNQIRQYPAYYFKVASNVPTYSDICQSFSVMYQGFQIVNHSGDVFIHACRENPQSKGDFVGDKFHISIAREQVPLAFQILSGLLFSEDSPIDKWKITDMNRVSQQSRVGIGAQFTLYVKSDQECSQYSALLLHKIRQFIMCLESNLLRSKIAPGEYPASDVRPEDWKYVSYRNELRSDRDGSERQEQMLREEPFYRLMIE.

His104 acts as the Proton donor in catalysis. The active-site Proton acceptor is Lys134.

Belongs to the phosphothreonine lyase family.

It is found in the secreted. Its activity is regulated as follows. Inhibited by the tyrosine phosphatase inhibitor vanadate. Functionally, catalyzes the removal of the phosphate group from the phosphothreonine in the mitogen-activated protein kinases such as MAPK2/ERK2, MAPK3/ERK1, MAPK8 and MAPK14 in an irreversible reaction, thus preventing the downstream phosphorylation of histone H3. This epigenetic modification results in inhibition of the transcription of a specific subset of pro-inflammatory genes, and ultimately to a reduced immune response against the invading pathogen. The diminished immune response enhances the bacterium's ability to disseminate and multiply within the host. The polypeptide is Phosphothreonine lyase OspF (ospF) (Shigella flexneri).